A 1687-amino-acid polypeptide reads, in one-letter code: A-kinase anchor protein SPHKAP (1687 aa).

Residues 1-14 (MDVNSRLSVQSNVE) are compositionally biased toward polar residues. Disordered regions lie at residues 1–25 (MDVN…PEPQ) and 272–293 (RKHR…ENTS). Residues 914–931 (FAEELAETVVSMATEIAA) are PKA-RII subunit binding domain. Residues 964 to 989 (LKRKKENSSAGSTVRKHKPPRLSEIK) are disordered. A phosphoserine mark is found at serine 1010, serine 1070, serine 1092, serine 1105, serine 1106, serine 1109, serine 1244, and serine 1273. Disordered regions lie at residues 1363-1406 (VTEG…SPRR) and 1421-1520 (DQKE…PDDT). Residues 1366–1375 (GNHSPVSSPG) are compositionally biased toward polar residues. Over residues 1382–1393 (KPSDFDPRRETS) the composition is skewed to basic and acidic residues. Positions 1461 to 1470 (TAPSTCQSSR) are enriched in polar residues. The span at 1482 to 1494 (EVLKEDIPRDESR) shows a compositional bias: basic and acidic residues. The segment covering 1495–1508 (NPPSSSEESTGSWS) has biased composition (low complexity).

This sequence belongs to the AKAP110 family. In terms of assembly, interacts (via the PKA-RII subunit binding domain) with the RI subunit of PKA. Interacts with SPHK1; the interaction greatly reduces SPHK1 activity.

It is found in the cytoplasm. Its function is as follows. Anchoring protein that binds preferentially to the type I regulatory subunit of c-AMP-dependent protein kinase (PKA type I) and targets it to distinct subcellular compartments. May act as a converging factor linking cAMP and sphingosine signaling pathways. Plays a regulatory role in the modulation of SPHK1. This Mus musculus (Mouse) protein is A-kinase anchor protein SPHKAP (Sphkap).